Here is a 55-residue protein sequence, read N- to C-terminus: Neurotoxin BmP08 (55 aa).

The signal sequence occupies residues 1 to 23 (MKIFFAVLVILVLFSMLIWTAYG). 3 disulfide bridges follow: cysteine 30–cysteine 45, cysteine 36–cysteine 50, and cysteine 39–cysteine 53.

As to expression, expressed by the venom gland.

The protein localises to the secreted. In Olivierus martensii (Manchurian scorpion), this protein is Neurotoxin BmP08.